Here is a 259-residue protein sequence, read N- to C-terminus: MINPIAFKLGPLSLHWYAVCILVGLLLAVYLAAKEAPRKKMTSDDIIDFILIAFPLAIIGARIYYVAFEWSYYSQHLSDIFAIWNGGIAIYGGLITGTIVLFVYCYYKVLNPIHFLDIAAPSVMLAQAIGRWGNFFNQEAYGRAVSQLNYLPSFIRQQMFIDGSYRVPTFLYESMWNLIGFVIIMVWRRKPRSLVDGDIISFYLIWYGCGRLVIEGMRTDSLMLLGIRVSQYMSVLLIIIAIVFIFKRHRQKGISYYQE.

4 consecutive transmembrane segments (helical) span residues 12 to 32, 46 to 66, 83 to 103, and 109 to 129; these read LSLHWYAVCILVGLLLAVYLA, IIDFILIAFPLAIIGARIYYV, IWNGGIAIYGGLITGTIVLFV, and VLNPIHFLDIAAPSVMLAQAI. R131 is an a 1,2-diacyl-sn-glycero-3-phospho-(1'-sn-glycerol) binding site. 3 consecutive transmembrane segments (helical) span residues 167–187, 194–214, and 226–246; these read VPTFLYESMWNLIGFVIIMVW, LVDGDIISFYLIWYGCGRLVI, and GIRVSQYMSVLLIIIAIVFIF.

The protein belongs to the Lgt family.

The protein resides in the cell membrane. The enzyme catalyses L-cysteinyl-[prolipoprotein] + a 1,2-diacyl-sn-glycero-3-phospho-(1'-sn-glycerol) = an S-1,2-diacyl-sn-glyceryl-L-cysteinyl-[prolipoprotein] + sn-glycerol 1-phosphate + H(+). The protein operates within protein modification; lipoprotein biosynthesis (diacylglyceryl transfer). Functionally, catalyzes the transfer of the diacylglyceryl group from phosphatidylglycerol to the sulfhydryl group of the N-terminal cysteine of a prolipoprotein, the first step in the formation of mature lipoproteins. The sequence is that of Phosphatidylglycerol--prolipoprotein diacylglyceryl transferase from Streptococcus equi subsp. equi (strain 4047).